The sequence spans 558 residues: MVKLTTWLKKIGWGETITQRIFCFYIYCILFGSLLLFLPIALQDNYQKVVSYGIDWQGKRFEQKTDYNFLDALFLSTSAFSDTGLSTVVVSKTYSIFGQIVLAVLLQLGGIGFVVIAFLAWRLFNFHKKEQYSFYEKLMLQSERGGSKLGNTSEMILVSIIFLFIVELIYGFLYGILFYFIPGFEPANLFADHAKVSTQLKALVVDSNQTIAAFNDINKAFQAGFFHSLSAVNNAGIDLIGGSSFVPYRNGLGIIIQWLTISQIIFGGIGYPCLFDGFEAIKKKIKYGRHTKHQFSLFTKLTVITNIVVILLFFTLLLMVEFIASDSLTNTIVNFSDEKKSLINTQLQSQSNQAIHASVFGNNPNASRVMQLFFMVISSRSAGFSVFPVASEIQTTKIIIALAMFIGASPSSTAGGIRTTTLAVIFLALVAKFKGQKEVKAFKRSIDQTTVIDAFLVLIISLIAVLLTAVLLPLSMEQPVSFIDALFETTSAFGTVGLSSGATVNIALDPNRNTFNFLALCLLMVMGQVGVSSSVLTFVRKHPKANSYSYPKEAVKIG.

Transmembrane regions (helical) follow at residues 21–41 (IFCF…LPIA), 69–89 (FLDA…STVV), 100–120 (IVLA…AFLA), 160–180 (IIFL…LFYF), 220–240 (AFQA…IDLI), 251–271 (GLGI…GIGY), 303–323 (VITN…VEFI), 386–406 (VFPV…AMFI), 413–433 (TAGG…VAKF), 454–474 (AFLV…LLPL), 479–499 (PVSF…VGLS), and 519–539 (ALCL…LTFV).

It belongs to the TrkH potassium transport family.

The protein resides in the cell membrane. This is an uncharacterized protein from Mycoplasma genitalium (strain ATCC 33530 / DSM 19775 / NCTC 10195 / G37) (Mycoplasmoides genitalium).